Consider the following 309-residue polypeptide: MRRVILSNPRGFCAGVVRAIQVVEAALEKWGAPIYVKHEIVHNRHVVDDLRRRGAIFIENLSDIPCGGKVIYSAHGIPPEVREEAKNRNLFDIDATCVLVTKIHSAVKLYASKGYQIILIGKKKHVEVIGIYGEAPDSVTVVEKVEDVENLPFGIDTPLFFVTQTTLSLDDVAEITQALKVRYPNVITLPSSSVCYATQNRQEALRSVLPRVNFVYVVGDVQSSNSNRLREVAERRNIPARLVNSPDHISDEILNYSGDIAITAGASTPENIVQLCISRLKELIPDLQVEEDIFAIEDVVFQPPKELRN.

Cys-13 contributes to the [4Fe-4S] cluster binding site. Residues His-42 and His-75 each contribute to the (2E)-4-hydroxy-3-methylbut-2-enyl diphosphate site. 2 residues coordinate dimethylallyl diphosphate: His-42 and His-75. The isopentenyl diphosphate site is built by His-42 and His-75. Position 97 (Cys-97) interacts with [4Fe-4S] cluster. His-125 contacts (2E)-4-hydroxy-3-methylbut-2-enyl diphosphate. His-125 is a dimethylallyl diphosphate binding site. His-125 provides a ligand contact to isopentenyl diphosphate. Glu-127 serves as the catalytic Proton donor. Thr-165 lines the (2E)-4-hydroxy-3-methylbut-2-enyl diphosphate pocket. Cys-195 provides a ligand contact to [4Fe-4S] cluster. (2E)-4-hydroxy-3-methylbut-2-enyl diphosphate-binding residues include Ser-223, Ser-224, Asn-225, and Ser-267. 4 residues coordinate dimethylallyl diphosphate: Ser-223, Ser-224, Asn-225, and Ser-267. The isopentenyl diphosphate site is built by Ser-223, Ser-224, Asn-225, and Ser-267.

The protein belongs to the IspH family. [4Fe-4S] cluster is required as a cofactor.

It catalyses the reaction isopentenyl diphosphate + 2 oxidized [2Fe-2S]-[ferredoxin] + H2O = (2E)-4-hydroxy-3-methylbut-2-enyl diphosphate + 2 reduced [2Fe-2S]-[ferredoxin] + 2 H(+). The catalysed reaction is dimethylallyl diphosphate + 2 oxidized [2Fe-2S]-[ferredoxin] + H2O = (2E)-4-hydroxy-3-methylbut-2-enyl diphosphate + 2 reduced [2Fe-2S]-[ferredoxin] + 2 H(+). It functions in the pathway isoprenoid biosynthesis; dimethylallyl diphosphate biosynthesis; dimethylallyl diphosphate from (2E)-4-hydroxy-3-methylbutenyl diphosphate: step 1/1. It participates in isoprenoid biosynthesis; isopentenyl diphosphate biosynthesis via DXP pathway; isopentenyl diphosphate from 1-deoxy-D-xylulose 5-phosphate: step 6/6. In terms of biological role, catalyzes the conversion of 1-hydroxy-2-methyl-2-(E)-butenyl 4-diphosphate (HMBPP) into a mixture of isopentenyl diphosphate (IPP) and dimethylallyl diphosphate (DMAPP). Acts in the terminal step of the DOXP/MEP pathway for isoprenoid precursor biosynthesis. In Chlamydia felis (strain Fe/C-56) (Chlamydophila felis), this protein is 4-hydroxy-3-methylbut-2-enyl diphosphate reductase.